The primary structure comprises 743 residues: Threonine synthase-like 1 (743 aa).

Lys-281 is modified (N6-acetyllysine). The residue at position 351 (Lys-351) is an N6-(pyridoxal phosphate)lysine.

It belongs to the threonine synthase family. Pyridoxal 5'-phosphate is required as a cofactor.

This chain is Threonine synthase-like 1 (THNSL1), found in Pongo abelii (Sumatran orangutan).